A 317-amino-acid polypeptide reads, in one-letter code: 3'-5' exoribonuclease YhaM (317 aa).

The segment at residues 17–90 is a DNA-binding region (OB); the sequence is FLLIKESTRG…QLKILSIRLS (74 aa). Positions 163–279 constitute an HD domain; sequence HVVSMLAIGK…LHLIDLIDAK (117 aa).

The protein belongs to the YhaM family.

In terms of biological role, shows a 3'-5' exoribonuclease activity. The chain is 3'-5' exoribonuclease YhaM from Oceanobacillus iheyensis (strain DSM 14371 / CIP 107618 / JCM 11309 / KCTC 3954 / HTE831).